Here is a 417-residue protein sequence, read N- to C-terminus: Methyltransferase/ribosomally synthesized cyclic peptide lentinulin A precursor ledMA (417 aa).

A methyltransferase domain region spans residues 1 to 251 (METPTLNKSG…GVSTFYIPPK (251 aa)). Residues Arg-72, Tyr-76, and Tyr-98 contribute to the active site. S-adenosyl-L-methionine-binding residues include Tyr-98, His-100, Val-103, Ala-130, Gln-172, Ala-213, Ser-244, and Thr-245. Residues 252–378 (ERKEINVDII…WAFRCAMKEM (127 aa)) are clasp domain. Residues 379–399 (PISLLDNAKQSMEEASEQGFP) form a precursor leader region. Ile-401 is modified (N-methylisoleucine). N-methylvaline occurs at positions 403 and 404. Gly-405 carries the post-translational modification N-methylglycine. Val-406 and Val-407 each carry N-methylvaline. N-methylglycine is present on Gly-408. Val-410 is subject to N-methylvaline. Position 411 is an N-methylglycine (Gly-411). An N-methylvaline modification is found at Val-413.

This sequence in the N-terminal section; belongs to the precorrin methyltransferase family. Homodimer. Post-translationally, ledMA automethylates at Ile-401, Val-403, Val-404, Gly-405, Val-406, Val-407, Gly-408, Val-410, Gly-411 and Val-413 before being processed by the prolyloligopeptidase ledP which likely forms a peptidyl ester upon removal of the follower propeptide, which then undergoes macrocyclization with the N-terminus of the modified core peptide. Peptide backbone alpha-N-methylations change the physicochemical properties of amide bonds to provide structural constraints and other favorable characteristics including biological membrane permeability to peptides.

Its pathway is mycotoxin biosynthesis. Functionally, fusion protein of the methyltransferase ledM and the lentinulin A core peptide; part of the gene cluster that mediates the biosynthesis of lentinulin A, a highly methylated cyclic dodecapeptide with nematodicidal activity. Lentinulin A derives from the C-terminus of the ledMA protein, and it is the ledMA protein that methylates its own C-terminus using S-adenosyl methionine (SAM). The C-terminus is subsequently cleaved off and macrocyclized by the prolyloligopeptidase ledP to give the final product. The chain is Methyltransferase/ribosomally synthesized cyclic peptide lentinulin A precursor ledMA from Lentinula edodes (Shiitake mushroom).